The following is a 464-amino-acid chain: Cytoplasmic tRNA 2-thiolation protein 2 (464 aa).

The protein belongs to the CTU2/NCS2 family.

It localises to the cytoplasm. It participates in tRNA modification; 5-methoxycarbonylmethyl-2-thiouridine-tRNA biosynthesis. Plays a central role in 2-thiolation of mcm(5)S(2)U at tRNA wobble positions of tRNA(Lys), tRNA(Glu) and tRNA(Gln). May act by forming a heterodimer with NCS6/CTU1 that ligates sulfur from thiocarboxylated URM1 onto the uridine of tRNAs at wobble position. This Oryza sativa subsp. japonica (Rice) protein is Cytoplasmic tRNA 2-thiolation protein 2.